Here is a 634-residue protein sequence, read N- to C-terminus: 1-deoxy-D-xylulose-5-phosphate synthase (634 aa).

Thiamine diphosphate contacts are provided by residues His-74 and 115–117 (AHS). Asp-146 is a Mg(2+) binding site. Thiamine diphosphate is bound by residues 147-148 (GA), Asn-176, Tyr-283, and Glu-365. Asn-176 is a Mg(2+) binding site.

This sequence belongs to the transketolase family. DXPS subfamily. In terms of assembly, homodimer. Mg(2+) serves as cofactor. Thiamine diphosphate is required as a cofactor.

The enzyme catalyses D-glyceraldehyde 3-phosphate + pyruvate + H(+) = 1-deoxy-D-xylulose 5-phosphate + CO2. It participates in metabolic intermediate biosynthesis; 1-deoxy-D-xylulose 5-phosphate biosynthesis; 1-deoxy-D-xylulose 5-phosphate from D-glyceraldehyde 3-phosphate and pyruvate: step 1/1. Its function is as follows. Catalyzes the acyloin condensation reaction between C atoms 2 and 3 of pyruvate and glyceraldehyde 3-phosphate to yield 1-deoxy-D-xylulose-5-phosphate (DXP). This Burkholderia orbicola (strain MC0-3) protein is 1-deoxy-D-xylulose-5-phosphate synthase.